Here is a 105-residue protein sequence, read N- to C-terminus: Pyrimidine/purine nucleoside phosphorylase (105 aa).

It belongs to the nucleoside phosphorylase PpnP family.

It catalyses the reaction a purine D-ribonucleoside + phosphate = a purine nucleobase + alpha-D-ribose 1-phosphate. The catalysed reaction is adenosine + phosphate = alpha-D-ribose 1-phosphate + adenine. The enzyme catalyses cytidine + phosphate = cytosine + alpha-D-ribose 1-phosphate. It carries out the reaction guanosine + phosphate = alpha-D-ribose 1-phosphate + guanine. It catalyses the reaction inosine + phosphate = alpha-D-ribose 1-phosphate + hypoxanthine. The catalysed reaction is thymidine + phosphate = 2-deoxy-alpha-D-ribose 1-phosphate + thymine. The enzyme catalyses uridine + phosphate = alpha-D-ribose 1-phosphate + uracil. It carries out the reaction xanthosine + phosphate = alpha-D-ribose 1-phosphate + xanthine. Its function is as follows. Catalyzes the phosphorolysis of diverse nucleosides, yielding D-ribose 1-phosphate and the respective free bases. Can use uridine, adenosine, guanosine, cytidine, thymidine, inosine and xanthosine as substrates. Also catalyzes the reverse reactions. This is Pyrimidine/purine nucleoside phosphorylase from Cupriavidus taiwanensis (strain DSM 17343 / BCRC 17206 / CCUG 44338 / CIP 107171 / LMG 19424 / R1) (Ralstonia taiwanensis (strain LMG 19424)).